Reading from the N-terminus, the 445-residue chain is Branched-chain amino acid permease BraB (445 aa).

12 helical membrane-spanning segments follow: residues isoleucine 11–proline 31, isoleucine 45–leucine 65, proline 79–isoleucine 99, leucine 122–proline 142, phenylalanine 158–alanine 178, phenylalanine 192–valine 212, alanine 233–alanine 253, tyrosine 275–threonine 295, leucine 311–isoleucine 331, isoleucine 339–valine 359, isoleucine 375–phenylalanine 395, and isoleucine 415–isoleucine 435.

It belongs to the branched chain amino acid transporter family.

The protein resides in the cell membrane. Branched-chain amino acid transport system which is involved in the uptake of isoleucine, valine and probably leucine. Together with BcaP and BrnQ, plays an important role in the activation of CodY, a branched-chain amino acid-responsive transcriptional regulator that controls the expression of several dozen transcription units in B.subtilis. In Bacillus subtilis (strain 168), this protein is Branched-chain amino acid permease BraB.